The following is a 472-amino-acid chain: Methanethiol oxidase (472 aa).

This sequence belongs to the selenium-binding protein family.

The protein resides in the nucleus. It localises to the cytoplasm. Its subcellular location is the cytosol. It is found in the membrane. It carries out the reaction methanethiol + O2 + H2O = hydrogen sulfide + formaldehyde + H2O2 + H(+). It functions in the pathway organosulfur degradation. In terms of biological role, catalyzes the oxidation of methanethiol, an organosulfur compound known to be produced in substantial amounts by gut bacteria. Selenium-binding protein which may be involved in the sensing of reactive xenobiotics in the cytoplasm. May be involved in intra-Golgi protein transport. The protein is Methanethiol oxidase (selenbp1-a) of Xenopus laevis (African clawed frog).